The following is a 255-amino-acid chain: tRNA (guanine-N(7)-)-methyltransferase (255 aa).

The segment at 1 to 29 (MMHDDPNEAGLPPDDAALPDEAADGADEV) is disordered. A compositionally biased stretch (acidic residues) spans 17–27 (ALPDEAADGAD). 4 residues coordinate S-adenosyl-L-methionine: E86, E111, D138, and D161. Residue D161 is part of the active site. Substrate-binding positions include K165, D197, and 232–235 (TKFE).

It belongs to the class I-like SAM-binding methyltransferase superfamily. TrmB family.

It carries out the reaction guanosine(46) in tRNA + S-adenosyl-L-methionine = N(7)-methylguanosine(46) in tRNA + S-adenosyl-L-homocysteine. It functions in the pathway tRNA modification; N(7)-methylguanine-tRNA biosynthesis. Its function is as follows. Catalyzes the formation of N(7)-methylguanine at position 46 (m7G46) in tRNA. This Burkholderia ambifaria (strain ATCC BAA-244 / DSM 16087 / CCUG 44356 / LMG 19182 / AMMD) (Burkholderia cepacia (strain AMMD)) protein is tRNA (guanine-N(7)-)-methyltransferase.